A 125-amino-acid polypeptide reads, in one-letter code: Histone H1-like protein HC1 (125 aa).

Belongs to the histone H1/H5 family. HCT subfamily.

In terms of biological role, might have a role analogous to that of eukaryotic histone proteins. The protein is Histone H1-like protein HC1 (hctA) of Chlamydia muridarum (strain MoPn / Nigg).